The sequence spans 218 residues: MGQKVNPIGLRIGIIRDWESRWYAEKDYADLLHEDLKIREYISKRLQDAAVSRVEIERAANRVNVTIHTAKPGMVIGKGGSEVEALRKALAQLTGKRVHINIVEIKKPDLDARLVAENIARQLENRVSFRRAQKQAIQRAMRAGAKGIKTMVSGRLGGADIARSEHYSEGTVPLHTLRADIDYGTAEADTTYGKIGVKVWIYRGEVLPTKKKAEEGGK.

The 69-residue stretch at 38–106 folds into the KH type-2 domain; the sequence is IREYISKRLQ…RVHINIVEIK (69 aa).

Belongs to the universal ribosomal protein uS3 family. As to quaternary structure, part of the 30S ribosomal subunit. Forms a tight complex with proteins S10 and S14.

Binds the lower part of the 30S subunit head. Binds mRNA in the 70S ribosome, positioning it for translation. The polypeptide is Small ribosomal subunit protein uS3 (Geobacillus kaustophilus (strain HTA426)).